We begin with the raw amino-acid sequence, 96 residues long: Co-chaperonin GroES (96 aa).

This sequence belongs to the GroES chaperonin family. In terms of assembly, heptamer of 7 subunits arranged in a ring. Interacts with the chaperonin GroEL.

The protein localises to the cytoplasm. Functionally, together with the chaperonin GroEL, plays an essential role in assisting protein folding. The GroEL-GroES system forms a nano-cage that allows encapsulation of the non-native substrate proteins and provides a physical environment optimized to promote and accelerate protein folding. GroES binds to the apical surface of the GroEL ring, thereby capping the opening of the GroEL channel. This Nitrosococcus oceani (strain ATCC 19707 / BCRC 17464 / JCM 30415 / NCIMB 11848 / C-107) protein is Co-chaperonin GroES.